The chain runs to 208 residues: ATP phosphoribosyltransferase (208 aa).

This sequence belongs to the ATP phosphoribosyltransferase family. Short subfamily. As to quaternary structure, heteromultimer composed of HisG and HisZ subunits.

It is found in the cytoplasm. The catalysed reaction is 1-(5-phospho-beta-D-ribosyl)-ATP + diphosphate = 5-phospho-alpha-D-ribose 1-diphosphate + ATP. Its pathway is amino-acid biosynthesis; L-histidine biosynthesis; L-histidine from 5-phospho-alpha-D-ribose 1-diphosphate: step 1/9. In terms of biological role, catalyzes the condensation of ATP and 5-phosphoribose 1-diphosphate to form N'-(5'-phosphoribosyl)-ATP (PR-ATP). Has a crucial role in the pathway because the rate of histidine biosynthesis seems to be controlled primarily by regulation of HisG enzymatic activity. This Lactococcus lactis subsp. cremoris (strain MG1363) protein is ATP phosphoribosyltransferase.